Consider the following 335-residue polypeptide: Leukocyte immunoglobulin-like receptor subfamily B member 4A (335 aa).

Positions 1-23 (MIAMLTVLLYLGLILEPRTAVQA) are cleaved as a signal peptide. At 24–238 (GHLPKPIIWA…TEDGLETYQK (215 aa)) the chain is on the extracellular side. 2 consecutive Ig-like C2-type domains span residues 42–125 (YTSV…ENPS) and 124–212 (PSLS…KPSN). Cys49 and Cys98 form a disulfide bridge. 2 N-linked (GlcNAc...) asparagine glycosylation sites follow: Asn133 and Asn191. An intrachain disulfide couples Cys144 to Cys196. Residues 239-260 (ILIGVLVSFLLLFFLLLFLILI) traverse the membrane as a helical segment. Over 261–335 (GYQYGHKKKA…CIRTQEQNNS (75 aa)) the chain is Cytoplasmic. Short sequence motifs (ITIM motif) lie at residues 298-303 (IVYAQV) and 320-325 (VTYAQL).

As to quaternary structure, interacts (when tyrosine phosphorylated) with SH2 domain-containing phosphatases PTPN6/SHP-1 and PTPN11/SHP-2; interaction with PTPN6 enhances inhibition of mast cell activation. Tyrosine phosphorylated. Expressed on mast cells and natural killer cells (at protein level). Expressed on neutrophils (at protein level). Expressed on eosinophils (at protein level). Expressed on dendritic cells (at protein level). Expressed on memory and marginal zone B cells (at protein level). Expressed on CD8 T cells (at protein level). Expressed in the uterus of pregnant mice where it is detected at day 4.0 of pregnancy with levels dropping at day 4.5. Highly expressed in the luminal epithelium of uterine endometrium with lower levels in the glandular epithelium.

Its subcellular location is the cell membrane. Inhibitory receptor involved in the down-regulation of the immune response. Receptor for FN1. Receptor for integrin ITGAV/ITGB3. Inhibits IgE-mediated mast cell activation, at least in part through interaction with ITGAV/ITGB3. Also inhibits KITLG/SCF-mediated mast cell activation. Through interaction with ITGAV/ITGB3, inhibits antibody production by memory and marginal zone B cells, probably by suppressing their differentiation into plasma cells. Inhibits IFNG production by CD8 T cells, CD4 T cells and natural killer cells. Inhibits antigen presentation by dendritic cells to T cells, preventing T cell activation. Inhibits lipopolysaccharide-mediated neutrophil-dependent vascular injury. Suppresses the allergic inflammatory response by inhibiting infiltration of neutrophils and eosinophils and preventing mast cell degranulation. Inhibits lysis by natural killer cells. The polypeptide is Leukocyte immunoglobulin-like receptor subfamily B member 4A (Mus musculus (Mouse)).